Reading from the N-terminus, the 142-residue chain is Transcription antitermination protein NusB (142 aa).

This sequence belongs to the NusB family.

In terms of biological role, involved in transcription antitermination. Required for transcription of ribosomal RNA (rRNA) genes. Binds specifically to the boxA antiterminator sequence of the ribosomal RNA (rrn) operons. This Streptococcus uberis (strain ATCC BAA-854 / 0140J) protein is Transcription antitermination protein NusB.